The primary structure comprises 338 residues: Ketol-acid reductoisomerase (NADP(+)) (338 aa).

The KARI N-terminal Rossmann domain maps to 3-183 (IDVFYDDDAD…GGARAGVIPT (181 aa)). NADP(+) is bound by residues 26–29 (YGSQ), Arg-49, Ser-52, Ser-54, and 84–87 (DTSQ). His-109 is an active-site residue. Gly-135 is an NADP(+) binding site. Residues 184–329 (TFEAETVTDL…AKLRDLMSWV (146 aa)) enclose the KARI C-terminal knotted domain. The Mg(2+) site is built by Asp-192, Glu-196, Glu-228, and Glu-232. Position 253 (Ser-253) interacts with substrate.

Belongs to the ketol-acid reductoisomerase family. Mg(2+) is required as a cofactor.

It catalyses the reaction (2R)-2,3-dihydroxy-3-methylbutanoate + NADP(+) = (2S)-2-acetolactate + NADPH + H(+). The enzyme catalyses (2R,3R)-2,3-dihydroxy-3-methylpentanoate + NADP(+) = (S)-2-ethyl-2-hydroxy-3-oxobutanoate + NADPH + H(+). Its pathway is amino-acid biosynthesis; L-isoleucine biosynthesis; L-isoleucine from 2-oxobutanoate: step 2/4. It participates in amino-acid biosynthesis; L-valine biosynthesis; L-valine from pyruvate: step 2/4. In terms of biological role, involved in the biosynthesis of branched-chain amino acids (BCAA). Catalyzes an alkyl-migration followed by a ketol-acid reduction of (S)-2-acetolactate (S2AL) to yield (R)-2,3-dihydroxy-isovalerate. In the isomerase reaction, S2AL is rearranged via a Mg-dependent methyl migration to produce 3-hydroxy-3-methyl-2-ketobutyrate (HMKB). In the reductase reaction, this 2-ketoacid undergoes a metal-dependent reduction by NADPH to yield (R)-2,3-dihydroxy-isovalerate. The sequence is that of Ketol-acid reductoisomerase (NADP(+)) from Corynebacterium jeikeium (strain K411).